Reading from the N-terminus, the 429-residue chain is 3-phosphoshikimate 1-carboxyvinyltransferase (429 aa).

3-phosphoshikimate contacts are provided by Lys20, Ser21, and Arg25. A phosphoenolpyruvate-binding site is contributed by Lys20. Residues Gly89 and Arg118 each contribute to the phosphoenolpyruvate site. Residues Ser164, Ser165, Gln166, Ser192, Asp311, and Lys338 each coordinate 3-phosphoshikimate. Gln166 is a phosphoenolpyruvate binding site. The active-site Proton acceptor is the Asp311. Positions 342 and 384 each coordinate phosphoenolpyruvate.

Belongs to the EPSP synthase family. Monomer.

It is found in the cytoplasm. It catalyses the reaction 3-phosphoshikimate + phosphoenolpyruvate = 5-O-(1-carboxyvinyl)-3-phosphoshikimate + phosphate. It functions in the pathway metabolic intermediate biosynthesis; chorismate biosynthesis. Functionally, catalyzes the transfer of the enolpyruvyl moiety of phosphoenolpyruvate (PEP) to the 5-hydroxyl of shikimate-3-phosphate (S3P) to produce enolpyruvyl shikimate-3-phosphate and inorganic phosphate. The protein is 3-phosphoshikimate 1-carboxyvinyltransferase of Methanococcus maripaludis (strain C5 / ATCC BAA-1333).